The following is a 158-amino-acid chain: MKRVEKRAEKQGRGTARKSRRRLARELALQGLYQWCVAGGSAGTIEAQLRDTEEFPKTDEEYFSRLLHGVLMQAPELEKEIQPCLDRPFNELSPVEISILLLGAYELERHPEIPYRAVINEAVELAKAYGGTHGHKYVNGVLDKLAVKLRAAEIGAKI.

The span at Met-1–Gly-12 shows a compositional bias: basic and acidic residues. Residues Met-1–Arg-20 are disordered.

This sequence belongs to the NusB family.

Involved in transcription antitermination. Required for transcription of ribosomal RNA (rRNA) genes. Binds specifically to the boxA antiterminator sequence of the ribosomal RNA (rrn) operons. The chain is Transcription antitermination protein NusB from Nitrosospira multiformis (strain ATCC 25196 / NCIMB 11849 / C 71).